The following is an 83-amino-acid chain: Kunitz-type serine protease inhibitor mulgin-4 (83 aa).

Residues 1 to 24 form the signal peptide; the sequence is MSSGGLLLLLGLLTLWEGLTPVSS. The 51-residue stretch at 31–81 folds into the BPTI/Kunitz inhibitor domain; the sequence is CELPADPGPCNGLFQAFYYNPVQRTCLKFRYGGCKGNPNTFKTIEECKRTC. 3 cysteine pairs are disulfide-bonded: Cys31/Cys81, Cys40/Cys64, and Cys56/Cys77.

The protein belongs to the venom Kunitz-type family. Expressed by the venom gland.

It localises to the secreted. Its function is as follows. Serine protease inhibitor. This chain is Kunitz-type serine protease inhibitor mulgin-4, found in Pseudechis australis (Mulga snake).